We begin with the raw amino-acid sequence, 193 residues long: Ribosome maturation factor RimM (193 aa).

Positions 97–172 constitute a PRC barrel domain; it reads DDEFYLTDLV…LILADPPALV (76 aa). The interval 168–193 is disordered; that stretch reads PPALVGDHEGPEEKGLDENEELGDRD. Basic and acidic residues predominate over residues 173–193; it reads GDHEGPEEKGLDENEELGDRD.

This sequence belongs to the RimM family. Binds ribosomal protein uS19.

Its subcellular location is the cytoplasm. Functionally, an accessory protein needed during the final step in the assembly of 30S ribosomal subunit, possibly for assembly of the head region. Essential for efficient processing of 16S rRNA. May be needed both before and after RbfA during the maturation of 16S rRNA. It has affinity for free ribosomal 30S subunits but not for 70S ribosomes. The polypeptide is Ribosome maturation factor RimM (Caulobacter vibrioides (strain ATCC 19089 / CIP 103742 / CB 15) (Caulobacter crescentus)).